The sequence spans 103 residues: Defensin-like protein 268 (103 aa).

The signal sequence occupies residues 1–24 (MARLIFHFVFALILAAYLLSVTDA). Intrachain disulfides connect Cys44–Cys103, Cys68–Cys87, Cys74–Cys98, and Cys78–Cys100.

It belongs to the DEFL family.

It localises to the secreted. The polypeptide is Defensin-like protein 268 (Arabidopsis thaliana (Mouse-ear cress)).